The primary structure comprises 65 residues: Small vasohibin-binding protein (65 aa).

The segment covering 1–22 (MEPACRKDKQKQQTPTRGDRTK) has biased composition (basic and acidic residues). A disordered region spans residues 1-30 (MEPACRKDKQKQQTPTRGDRTKQKTAQQEL). A coiled-coil region spans residues 31-51 (KQRQRAEIYALNKVMTELEQQ).

Belongs to the SVBP family.

It localises to the cytoplasm. The protein resides in the secreted. The protein localises to the cytoskeleton. Functionally, enhances the tyrosine carboxypeptidase activity of vash1 and vash2, thereby promoting the removal of the C-terminal tyrosine residue of alpha-tubulin. Also required to enhance the solubility and secretion of vash1 and vash2. May play a role in axon and excitatory synapse formation. In Danio rerio (Zebrafish), this protein is Small vasohibin-binding protein.